A 149-amino-acid chain; its full sequence is Large ribosomal subunit protein uL15 (149 aa).

The tract at residues 1-54 (MSLKLHNLKPTPNSRPEKHRKGRGHAAGKGKQAGKGQSGQNKRKGHRLGFEGGQ) is disordered. Residues 17–28 (EKHRKGRGHAAG) are compositionally biased toward basic residues.

Belongs to the universal ribosomal protein uL15 family. Part of the 50S ribosomal subunit.

In terms of biological role, binds to the 23S rRNA. The chain is Large ribosomal subunit protein uL15 from Mycoplasmopsis synoviae (strain 53) (Mycoplasma synoviae).